The primary structure comprises 2103 residues: uncharacterized protein (2103 aa).

Over residues 1–12 (MSVPGTPGAMEP) the composition is skewed to low complexity. The interval 1-61 (MSVPGTPGAM…DADDQEEEME (61 aa)) is disordered. The segment covering 51-61 (EDADDQEEEME) has biased composition (acidic residues). In terms of domain architecture, Bromo spans 77–196 (YELQQGYRIL…MMLEQKLALL (120 aa)). Disordered regions lie at residues 730–750 (AKHK…ITKK), 853–881 (NREL…SIDS), 933–956 (QSKQ…AKLS), 1224–1244 (SASP…TLNG), and 1770–1817 (GATR…STSP). Residues 865–877 (DLGKDSPKGEISK) show a composition bias toward basic and acidic residues. Positions 1224-1234 (SASPTISSTGQ) are enriched in polar residues. Residues 1235–1244 (PLSSTTTLNG) are compositionally biased toward low complexity. Over residues 1773-1794 (RSVSISKRQSRTSLQFHSPGIS) the composition is skewed to polar residues. Over residues 1795–1808 (TTVPTNVNTNKPQT) the composition is skewed to low complexity.

The protein resides in the nucleus. This is an uncharacterized protein from Homo sapiens (Human).